The following is a 59-amino-acid chain: Ferredoxin (59 aa).

4Fe-4S ferredoxin-type domains follow at residues 2–30 (GKIT…LEVN) and 31–59 (DHVE…LKVE). Residues Cys12, Cys15, Cys18, Cys22, Cys41, Cys44, Cys47, and Cys51 each coordinate [4Fe-4S] cluster.

The cofactor is [4Fe-4S] cluster.

Functionally, ferredoxins are iron-sulfur proteins that transfer electrons in a wide variety of metabolic reactions. The protein is Ferredoxin of Entamoeba histolytica (strain ATCC 30459 / HM-1:IMSS / ABRM).